The chain runs to 857 residues: MPGTNLTREEARQRATLLTVDSYEIDLDLTGAQEGGTYRSVTTVRFDVAEGGGESFIDLVAPTVHEVTLNGDALDTAEVFQDSRIALPGLLPGRNILRVVADCAYTNTGEGLHRFVDPVDDQAYLYTQFEVPDARRVFASFEQPDLKATFQFTVKAPEGWTVISNSPTPEPKDNVWEFEPTPRISSYVTALIVGPYHSVHSVYEKDGQSVPLGIYCRPSLAEHLDADAIFEVTRQGFDWFQEKFDYAYPFKKYDQLFVPEFNAGAMENAGAVTIRDQYVFRSKVTDAAYEVRAATILHELAHMWFGDLVTMEWWNDLWLNESFATYAEAACQAAAPGSKWPHSWTTFANQMKTWAYRQDQLPSTHPIMADISDLDDVLVNFDGITYAKGASVLKQLVAYVGEEAFFKGVQAYFKRHAFGNTRLSDLLGALEETSGRDLKTWSKAWLETAGINVLRPEIETDADGVITSFAIRQEAPALPAGAKGEPTLRPHRIAIGAYDLDGAGKLVRGDRVELDVDGELTAVPQLVGKARPAVLLLNDDDLSYAKVRLDEQSLAVVTEHLGDFTESLPRALCWASAWDMTRDAELATRDYLALVLSGIGKESDIGVVQSLHRQVKLAIDQYAAPTAREALLTRWTEATLAHLRAAEAGSDHQLAWARAFAATARTPEQLDLLDALLDGTQTIEGLAVDTELRWAFVQRLAAVGRFGGSEIAAEYERDKTAAGERHAATARAARPTEAAKAEAWESVVESDKLPNAVQEAVIAGFVQTDQRELLAAYTERYFEALKDVWASRSHEMAQQIAVGLYPAVQVSQDTLDRTDAWLASAEPNAALRRLVSESRSGIERALRAQAADAAAAE.

Residues Glu130 and 264 to 268 (GAMEN) contribute to the substrate site. His298 is a binding site for Zn(2+). Catalysis depends on Glu299, which acts as the Proton acceptor. His302 and Glu321 together coordinate Zn(2+).

The protein belongs to the peptidase M1 family. Monomer. Requires Zn(2+) as cofactor. In terms of processing, the N-terminus is blocked.

It is found in the cytoplasm. It catalyses the reaction Release of an N-terminal amino acid, Xaa-|-Yaa- from a peptide, amide or arylamide. Xaa is preferably Ala, but may be most amino acids including Pro (slow action). When a terminal hydrophobic residue is followed by a prolyl residue, the two may be released as an intact Xaa-Pro dipeptide.. In terms of biological role, aminopeptidase with broad substrate specificity to several peptides. Shows strong preference for leucine but also cleaves next to Arg and Lys in peptide-bond-containing substrates. The chain is Aminopeptidase N (pepN) from Streptomyces lividans.